The primary structure comprises 319 residues: Cytochrome c biogenesis protein CcsA (319 aa).

8 helical membrane passes run 14–34 (AFGGLLIAMLVYWISLAFPGI), 36–56 (GLNRLATLITLLVNIALTLTL), 69–89 (SNLYESLLFLAWGLTFVHLFI), 97–117 (LIGATAIPVAMFVTAFASLAL), 142–162 (IMMLSYAILILGSLLSILFLI), 227–247 (TIGLGFPLLTIGIIAGAVWAN), 254–274 (WSWDPKETWALITWLIFAAYL), and 288–308 (AILASLGFLVVWICYLGVNFL).

It belongs to the CcmF/CycK/Ccl1/NrfE/CcsA family. As to quaternary structure, may interact with Ccs1.

The protein localises to the plastid. The protein resides in the chloroplast thylakoid membrane. In terms of biological role, required during biogenesis of c-type cytochromes (cytochrome c6 and cytochrome f) at the step of heme attachment. The polypeptide is Cytochrome c biogenesis protein CcsA (Pyropia yezoensis (Susabi-nori)).